The following is a 410-amino-acid chain: MTQTSNNSDLRNGPDANGLFGSFGGRYVAETLMPLILDLAREYEAAKEDPAFKEELAYFQRDYVGRPSPLYFAERLTEFCGGAKIYLKREELNHTGAHKINNCIGQILLARRMGKKRIIAETGAGMHGVATATVAARFGLDCVIYMGTTDIERQQANVFRMKLLGAEVIPVVAGTGTLKDAMNEALRDWVTNVDSTFYLIGTVAGPHPYPAMVRDFQAVIGKETRDQLQAQEGRLPDSLVACIGGGSNAMGLFHPFLDDKSVEIIGVEAAGYGIETGKHAASLNGGVPGVLHGNRTFLLQDDDGQIIDAHSISAGLDYPGIGPEHAWLHDIGRVQYTSVTDDEALAAFHQCCRLEGIIPALESAHALAEVFKRAPKLPKDHLMVVNLSGRGDKDMQTVMHHMETSKQEKH.

At Lys99 the chain carries N6-(pyridoxal phosphate)lysine.

Belongs to the TrpB family. In terms of assembly, tetramer of two alpha and two beta chains. Pyridoxal 5'-phosphate serves as cofactor.

The enzyme catalyses (1S,2R)-1-C-(indol-3-yl)glycerol 3-phosphate + L-serine = D-glyceraldehyde 3-phosphate + L-tryptophan + H2O. It participates in amino-acid biosynthesis; L-tryptophan biosynthesis; L-tryptophan from chorismate: step 5/5. The beta subunit is responsible for the synthesis of L-tryptophan from indole and L-serine. The polypeptide is Tryptophan synthase beta chain (Pseudomonas fluorescens (strain Pf0-1)).